A 95-amino-acid polypeptide reads, in one-letter code: uncharacterized protein (95 aa).

Residues 12–32 traverse the membrane as a helical segment; sequence LASLIVSMVVLVVGLALWFFV. Positions 66 to 87 are disordered; the sequence is ANEPEKEAEPATAASEPKEDED.

The protein localises to the cell membrane. This is an uncharacterized protein from Salmonella typhi.